Consider the following 189-residue polypeptide: Putative biopolymer transport protein ExbB-like 1 (189 aa).

Helical transmembrane passes span 14-34 (FVTTLVLVWISLYLVMTLWVF), 99-119 (LVVLSIISSTAPFIGLFGTVV), and 147-167 (LIATAAGILAAIPAYSFYLIL).

The protein belongs to the ExbB/TolQ family.

It localises to the cell inner membrane. In Helicobacter pylori (strain ATCC 700392 / 26695) (Campylobacter pylori), this protein is Putative biopolymer transport protein ExbB-like 1.